The chain runs to 339 residues: Ketol-acid reductoisomerase (NADP(+)) (339 aa).

The KARI N-terminal Rossmann domain maps to 1-182 (MRVYYDRDAD…GGGRAGIIET (182 aa)). NADP(+)-binding positions include 24–27 (YGSQ), Arg-48, Ser-51, Thr-53, and 83–86 (DELQ). Residue His-108 is part of the active site. Gly-134 contributes to the NADP(+) binding site. The KARI C-terminal knotted domain maps to 183–328 (TFREECETDL…AKLRAMMPWI (146 aa)). Mg(2+)-binding residues include Asp-191, Glu-195, Glu-227, and Glu-231. A substrate-binding site is contributed by Ser-252.

Belongs to the ketol-acid reductoisomerase family. Mg(2+) is required as a cofactor.

The catalysed reaction is (2R)-2,3-dihydroxy-3-methylbutanoate + NADP(+) = (2S)-2-acetolactate + NADPH + H(+). The enzyme catalyses (2R,3R)-2,3-dihydroxy-3-methylpentanoate + NADP(+) = (S)-2-ethyl-2-hydroxy-3-oxobutanoate + NADPH + H(+). The protein operates within amino-acid biosynthesis; L-isoleucine biosynthesis; L-isoleucine from 2-oxobutanoate: step 2/4. It participates in amino-acid biosynthesis; L-valine biosynthesis; L-valine from pyruvate: step 2/4. Involved in the biosynthesis of branched-chain amino acids (BCAA). Catalyzes an alkyl-migration followed by a ketol-acid reduction of (S)-2-acetolactate (S2AL) to yield (R)-2,3-dihydroxy-isovalerate. In the isomerase reaction, S2AL is rearranged via a Mg-dependent methyl migration to produce 3-hydroxy-3-methyl-2-ketobutyrate (HMKB). In the reductase reaction, this 2-ketoacid undergoes a metal-dependent reduction by NADPH to yield (R)-2,3-dihydroxy-isovalerate. This chain is Ketol-acid reductoisomerase (NADP(+)), found in Methylocella silvestris (strain DSM 15510 / CIP 108128 / LMG 27833 / NCIMB 13906 / BL2).